The primary structure comprises 277 residues: Caspase-3 (277 aa).

N-acetylmethionine is present on Met1. 2 propeptides span residues 1 to 9 and 10 to 28; these read MENTENSVD and SKSIKNLEPKIIHGSESMD. Position 11 is an N6-acetyllysine (Lys11). A Phosphoserine modification is found at Ser26. Catalysis depends on residues His121 and Cys163. Cys163 carries the post-translational modification S-nitrosocysteine; in inhibited form. Arg207 bears the (Microbial infection) ADP-riboxanated arginine mark.

Belongs to the peptidase C14A family. As to quaternary structure, heterotetramer that consists of two anti-parallel arranged heterodimers, each one formed by a 17 kDa (p17) and a 12 kDa (p12) subunit. Interacts with BIRC6/bruce. Post-translationally, cleavage by granzyme B, caspase-6, caspase-8 and caspase-10 generates the two active subunits. Additional processing of the propeptides is likely due to the autocatalytic activity of the activated protease. Active heterodimers between the small subunit of caspase-7 protease and the large subunit of caspase-3 also occur and vice versa. In terms of processing, S-nitrosylated on its catalytic site cysteine in unstimulated human cell lines and denitrosylated upon activation of the Fas apoptotic pathway, associated with an increase in intracellular caspase activity. Fas therefore activates caspase-3 not only by inducing the cleavage of the caspase zymogen to its active subunits, but also by stimulating the denitrosylation of its active site thiol. Ubiquitinated by BIRC6; this activity is inhibited by DIABLO/SMAC. Post-translationally, (Microbial infection) ADP-riboxanation by C.violaceum CopC blocks CASP3 processing, preventing CASP3 activation and ability to recognize and cleave substrates. In terms of tissue distribution, highly expressed in lung, spleen, heart, liver and kidney. Moderate levels in brain and skeletal muscle, and low in testis. Also found in many cell lines, highest expression in cells of the immune system.

The protein localises to the cytoplasm. It catalyses the reaction Strict requirement for an Asp residue at positions P1 and P4. It has a preferred cleavage sequence of Asp-Xaa-Xaa-Asp-|- with a hydrophobic amino-acid residue at P2 and a hydrophilic amino-acid residue at P3, although Val or Ala are also accepted at this position.. Inhibited by isatin sulfonamides. Inhibited by BIRC6; following inhibition of BIRC6-caspase binding by DIABLO/SMAC, BIRC6 is subjected to caspase cleavage, leading to an increase in active caspases. In terms of biological role, thiol protease that acts as a major effector caspase involved in the execution phase of apoptosis. Following cleavage and activation by initiator caspases (CASP8, CASP9 and/or CASP10), mediates execution of apoptosis by catalyzing cleavage of many proteins. At the onset of apoptosis, it proteolytically cleaves poly(ADP-ribose) polymerase PARP1 at a '216-Asp-|-Gly-217' bond. Cleaves and activates sterol regulatory element binding proteins (SREBPs) between the basic helix-loop-helix leucine zipper domain and the membrane attachment domain. Cleaves and activates caspase-6, -7 and -9 (CASP6, CASP7 and CASP9, respectively). Cleaves and inactivates interleukin-18 (IL18). Involved in the cleavage of huntingtin. Triggers cell adhesion in sympathetic neurons through RET cleavage. Cleaves and inhibits serine/threonine-protein kinase AKT1 in response to oxidative stress. Acts as an inhibitor of type I interferon production during virus-induced apoptosis by mediating cleavage of antiviral proteins CGAS, IRF3 and MAVS, thereby preventing cytokine overproduction. Also involved in pyroptosis by mediating cleavage and activation of gasdermin-E (GSDME). Cleaves XRCC4 and phospholipid scramblase proteins XKR4, XKR8 and XKR9, leading to promote phosphatidylserine exposure on apoptotic cell surface. Cleaves BIRC6 following inhibition of BIRC6-caspase binding by DIABLO/SMAC. This Homo sapiens (Human) protein is Caspase-3 (CASP3).